A 176-amino-acid chain; its full sequence is CDP-archaeol synthase (176 aa).

4 helical membrane-spanning segments follow: residues 41 to 61 (GLIG…FLYN), 73 to 93 (IITV…KSYF), 114 to 134 (VVGS…LNWF), and 138 to 158 (FDSV…SPLL).

Belongs to the CDP-archaeol synthase family. Requires Mg(2+) as cofactor.

The protein localises to the cell membrane. It carries out the reaction 2,3-bis-O-(geranylgeranyl)-sn-glycerol 1-phosphate + CTP + H(+) = CDP-2,3-bis-O-(geranylgeranyl)-sn-glycerol + diphosphate. Its pathway is membrane lipid metabolism; glycerophospholipid metabolism. In terms of biological role, catalyzes the formation of CDP-2,3-bis-(O-geranylgeranyl)-sn-glycerol (CDP-archaeol) from 2,3-bis-(O-geranylgeranyl)-sn-glycerol 1-phosphate (DGGGP) and CTP. This reaction is the third ether-bond-formation step in the biosynthesis of archaeal membrane lipids. This chain is CDP-archaeol synthase, found in Methanocorpusculum labreanum (strain ATCC 43576 / DSM 4855 / Z).